The following is a 324-amino-acid chain: Glyoxylate/hydroxypyruvate reductase B (324 aa).

Residues arginine 237 and glutamate 266 contribute to the active site. The active-site Proton donor is histidine 285.

The protein belongs to the D-isomer specific 2-hydroxyacid dehydrogenase family. GhrB subfamily. Homodimer.

It is found in the cytoplasm. It catalyses the reaction glycolate + NADP(+) = glyoxylate + NADPH + H(+). It carries out the reaction (R)-glycerate + NAD(+) = 3-hydroxypyruvate + NADH + H(+). The enzyme catalyses (R)-glycerate + NADP(+) = 3-hydroxypyruvate + NADPH + H(+). In terms of biological role, catalyzes the NADPH-dependent reduction of glyoxylate and hydroxypyruvate into glycolate and glycerate, respectively. This is Glyoxylate/hydroxypyruvate reductase B from Shigella sonnei (strain Ss046).